The following is a 360-amino-acid chain: Uroporphyrinogen decarboxylase (360 aa).

Residues 31 to 35 (RQAGR), aspartate 81, tyrosine 157, threonine 212, and histidine 333 each bind substrate.

It belongs to the uroporphyrinogen decarboxylase family. In terms of assembly, homodimer.

Its subcellular location is the cytoplasm. It catalyses the reaction uroporphyrinogen III + 4 H(+) = coproporphyrinogen III + 4 CO2. Its pathway is porphyrin-containing compound metabolism; protoporphyrin-IX biosynthesis; coproporphyrinogen-III from 5-aminolevulinate: step 4/4. Catalyzes the decarboxylation of four acetate groups of uroporphyrinogen-III to yield coproporphyrinogen-III. The protein is Uroporphyrinogen decarboxylase of Herminiimonas arsenicoxydans.